Here is a 447-residue protein sequence, read N- to C-terminus: Methionine aminopeptidase 2-2 (447 aa).

Residues 1-89 (MAAQTAPELA…PRIPLTTLFP (89 aa)) are disordered. Residues 15-30 (NKNSGSAEANVVSNGG) are compositionally biased toward polar residues. The segment covering 34-47 (DDAENEGDSDDDKD) has biased composition (acidic residues). The span at 59 to 73 (KKKKKKRSKKKKKAA) shows a compositional bias: basic residues. A substrate-binding site is contributed by His-197. Residues Asp-217, Asp-228, and His-297 each coordinate a divalent metal cation. His-305 is a substrate binding site. 2 residues coordinate a divalent metal cation: Glu-333 and Glu-428.

This sequence belongs to the peptidase M24A family. Methionine aminopeptidase eukaryotic type 2 subfamily. The cofactor is Co(2+). It depends on Zn(2+) as a cofactor. Requires Mn(2+) as cofactor. Fe(2+) serves as cofactor.

Its subcellular location is the cytoplasm. The catalysed reaction is Release of N-terminal amino acids, preferentially methionine, from peptides and arylamides.. Its function is as follows. Cotranslationally removes the N-terminal methionine from nascent proteins. The N-terminal methionine is often cleaved when the second residue in the primary sequence is small and uncharged (Met-Ala-, Cys, Gly, Pro, Ser, Thr, or Val). The sequence is that of Methionine aminopeptidase 2-2 from Arthroderma otae (strain ATCC MYA-4605 / CBS 113480) (Microsporum canis).